Here is a 396-residue protein sequence, read N- to C-terminus: Activity-regulated cytoskeleton-associated protein (396 aa).

Residues 54–78 (SKQVERELKGLHRSVGKLESNLDGY) adopt a coiled-coil conformation. Residues 89–100 (KSIKACLCRCQE) are interaction with SH3GL1 or SH3GL3. The segment at 195-214 (QPWVPGEDGQPSPGVDTQIF) is interaction with DNM2. The residue at position 260 (Ser-260) is a Phosphoserine. Glycyl lysine isopeptide (Lys-Gly) (interchain with G-Cter in ubiquitin) cross-links involve residues Lys-268 and Lys-269. Thr-278 carries the post-translational modification Phosphothreonine. The disordered stretch occupies residues 356–396 (QDDLEQAAEPAGPHLPVEDEAETLTPAPNSESVASDRTQPE). Residues 381 to 396 (PAPNSESVASDRTQPE) show a composition bias toward polar residues.

It belongs to the ARC/ARG3.1 family. In terms of assembly, homooligomer; homooligomerizes into virion-like capsids. Interacts with SH3GL1/endophilin-2, SH3GL3/endophilin-3 and DNM2/DYN2. Interacts with CAMK2B (in the kinase inactive state); leading to target ARC to inactive synapses. Interacts with PSEN1. In terms of processing, palmitoylation anchors the protein into the membrane by allowing direct insertion into the hydrophobic core of the lipid bilayer. Post-translationally, ubiquitinated by UBE3A, leading to its degradation by the proteasome, thereby promoting AMPA receptors (AMPARs) expression at synapses. Ubiquitinated by RNF216 at Lys-268 and Lys-269 limiting ARC protein levels induced by synaptic activity and thus regulating ARC-dependent forms of synaptic plasticity. Phosphorylation at Ser-260 by CaMK2 prevents homooligomerization into virion-like capsids by disrupting an interaction surface essential for high-order oligomerization. Phosphorylation by CaMK2 inhibits synaptic activity.

Its subcellular location is the extracellular vesicle membrane. It is found in the postsynaptic cell membrane. The protein localises to the synapse. It localises to the postsynaptic density. The protein resides in the early endosome membrane. Its subcellular location is the cell projection. It is found in the dendrite. The protein localises to the cytoplasm. It localises to the cytoskeleton. The protein resides in the cell cortex. Its subcellular location is the dendritic spine. It is found in the cytoplasmic vesicle. The protein localises to the secretory vesicle. It localises to the acrosome. The protein resides in the clathrin-coated vesicle membrane. Functionally, master regulator of synaptic plasticity that self-assembles into virion-like capsids that encapsulate RNAs and mediate intercellular RNA transfer in the nervous system. ARC protein is released from neurons in extracellular vesicles that mediate the transfer of ARC mRNA into new target cells, where ARC mRNA can undergo activity-dependent translation. ARC capsids are endocytosed and are able to transfer ARC mRNA into the cytoplasm of neurons. Acts as a key regulator of synaptic plasticity: required for protein synthesis-dependent forms of long-term potentiation (LTP) and depression (LTD) and for the formation of long-term memory. Regulates synaptic plasticity by promoting endocytosis of AMPA receptors (AMPARs) in response to synaptic activity: this endocytic pathway maintains levels of surface AMPARs in response to chronic changes in neuronal activity through synaptic scaling, thereby contributing to neuronal homeostasis. Acts as a postsynaptic mediator of activity-dependent synapse elimination in the developing cerebellum by mediating elimination of surplus climbing fiber synapses. Accumulates at weaker synapses, probably to prevent their undesired enhancement. This suggests that ARC-containing virion-like capsids may be required to eliminate synaptic material. Required to transduce experience into long-lasting changes in visual cortex plasticity and for long-term memory. Involved in postsynaptic trafficking and processing of amyloid-beta A4 (APP) via interaction with PSEN1. In addition to its role in synapses, also involved in the regulation of the immune system: specifically expressed in skin-migratory dendritic cells and regulates fast dendritic cell migration, thereby regulating T-cell activation. The sequence is that of Activity-regulated cytoskeleton-associated protein from Homo sapiens (Human).